We begin with the raw amino-acid sequence, 345 residues long: Dihydroorotase (345 aa).

H13 and H15 together coordinate Zn(2+). Substrate contacts are provided by residues 15–17 (HFR) and N41. 3 residues coordinate Zn(2+): K98, H135, and H173. Residue K98 is modified to N6-carboxylysine. H135 is a substrate binding site. Position 218 (L218) interacts with substrate. Position 246 (D246) interacts with Zn(2+). D246 is an active-site residue. Residues H250 and A262 each contribute to the substrate site.

This sequence belongs to the metallo-dependent hydrolases superfamily. DHOase family. Class II DHOase subfamily. Homodimer. Zn(2+) serves as cofactor.

It catalyses the reaction (S)-dihydroorotate + H2O = N-carbamoyl-L-aspartate + H(+). It participates in pyrimidine metabolism; UMP biosynthesis via de novo pathway; (S)-dihydroorotate from bicarbonate: step 3/3. Functionally, catalyzes the reversible cyclization of carbamoyl aspartate to dihydroorotate. The protein is Dihydroorotase of Shewanella pealeana (strain ATCC 700345 / ANG-SQ1).